A 222-amino-acid polypeptide reads, in one-letter code: UPF0758 protein CT0611 (222 aa).

Residues 100–222 (KVKGARDVFE…WFSFRDHALL (123 aa)) form the MPN domain. Zn(2+) contacts are provided by H171, H173, and D184. Positions 171-184 (HNHPSGDVQPSNAD) match the JAMM motif motif.

This sequence belongs to the UPF0758 family.

The sequence is that of UPF0758 protein CT0611 from Chlorobaculum tepidum (strain ATCC 49652 / DSM 12025 / NBRC 103806 / TLS) (Chlorobium tepidum).